The chain runs to 363 residues: Anhydro-N-acetylmuramic acid kinase (363 aa).

10 to 17 is an ATP binding site; that stretch reads GTSLDGLD.

Belongs to the anhydro-N-acetylmuramic acid kinase family.

It carries out the reaction 1,6-anhydro-N-acetyl-beta-muramate + ATP + H2O = N-acetyl-D-muramate 6-phosphate + ADP + H(+). It functions in the pathway amino-sugar metabolism; 1,6-anhydro-N-acetylmuramate degradation. It participates in cell wall biogenesis; peptidoglycan recycling. In terms of biological role, catalyzes the specific phosphorylation of 1,6-anhydro-N-acetylmuramic acid (anhMurNAc) with the simultaneous cleavage of the 1,6-anhydro ring, generating MurNAc-6-P. Is required for the utilization of anhMurNAc either imported from the medium or derived from its own cell wall murein, and thus plays a role in cell wall recycling. This Pseudomonas fluorescens (strain Pf0-1) protein is Anhydro-N-acetylmuramic acid kinase.